The sequence spans 275 residues: Glucan endo-1,3-beta-glucosidase, acidic isoform PR-N (275 aa).

Glu196 functions as the Nucleophile in the catalytic mechanism.

It belongs to the glycosyl hydrolase 17 family. In terms of processing, the N-terminus is blocked.

It localises to the secreted. Its subcellular location is the extracellular space. The catalysed reaction is Hydrolysis of (1-&gt;3)-beta-D-glucosidic linkages in (1-&gt;3)-beta-D-glucans.. Its function is as follows. Implicated in the defense of plants against pathogens. The polypeptide is Glucan endo-1,3-beta-glucosidase, acidic isoform PR-N (PRN) (Nicotiana tabacum (Common tobacco)).